The following is a 449-amino-acid chain: Tubulin alpha chain (449 aa).

Residues Gln11, Glu71, Ser140, Gly144, Thr145, Thr179, Asn206, and Asn228 each contribute to the GTP site. Glu71 contributes to the Mg(2+) binding site. Residue Glu254 is part of the active site.

This sequence belongs to the tubulin family. As to quaternary structure, dimer of alpha and beta chains. A typical microtubule is a hollow water-filled tube with an outer diameter of 25 nm and an inner diameter of 15 nM. Alpha-beta heterodimers associate head-to-tail to form protofilaments running lengthwise along the microtubule wall with the beta-tubulin subunit facing the microtubule plus end conferring a structural polarity. Microtubules usually have 13 protofilaments but different protofilament numbers can be found in some organisms and specialized cells. Mg(2+) serves as cofactor.

Its subcellular location is the cytoplasm. The protein resides in the cytoskeleton. It catalyses the reaction GTP + H2O = GDP + phosphate + H(+). Its function is as follows. Tubulin is the major constituent of microtubules, a cylinder consisting of laterally associated linear protofilaments composed of alpha- and beta-tubulin heterodimers. Microtubules grow by the addition of GTP-tubulin dimers to the microtubule end, where a stabilizing cap forms. Below the cap, tubulin dimers are in GDP-bound state, owing to GTPase activity of alpha-tubulin. The protein is Tubulin alpha chain (TUBA) of Sordaria macrospora (strain ATCC MYA-333 / DSM 997 / K(L3346) / K-hell).